The following is a 370-amino-acid chain: MPTETLQTGSMVKPVSPAGTFTSAVPLRILNKGPDYFRRQAEPNPKRLSAVERLEADKAKYVKSQEVINAKQEPVKPAVLAKPPVCPAAKRALGSPTLKVFGNHAKTESGVQRENLKLEILKNIINSSEGSSSGSGHKHSSRNWPPHRSEATDLHRHSFAESLKVYPTQGRRSPQEGGSHVGRRLLEQSAESFLHVSHSSSDIRKVTSVKPLKAIPCSSSAPPLPPKPKIAAIASMKSPEADPVEPACGVSRRPSLQRSKSDLSDRYFRVDADVERFFNYCGLDPEELENLGMENFARANSDIISLNFRSASMISSDCEQSQDSNSDLRNDDSANDRVPYGISAIERNARIIKWLYSIKQARESQKVSHV.

Disordered stretches follow at residues 127–151 (SSEGSSSGSGHKHSSRNWPPHRSEA) and 237–256 (KSPEADPVEPACGVSRRPSL). Phosphoserine occurs at positions 238 and 301. The segment at 317 to 337 (DCEQSQDSNSDLRNDDSANDR) is disordered. A compositionally biased stretch (basic and acidic residues) spans 326 to 335 (SDLRNDDSAN).

The protein belongs to the FAM110 family. As to expression, detected in thyroid, spleen and testis, and at lower levels in stomach, spinal cord, lymph node, trachea, adrenal gland, prostate, ovary and intestine.

The protein resides in the cytoplasm. It is found in the cytoskeleton. Its subcellular location is the microtubule organizing center. The protein localises to the centrosome. Functionally, may be involved in tumor progression. The polypeptide is Protein FAM110B (FAM110B) (Homo sapiens (Human)).